A 174-amino-acid chain; its full sequence is Soma ferritin (174 aa).

Residues 8–157 form the Ferritin-like diiron domain; it reads QNYHAESEAG…DYITNLKRVG (150 aa). Positions 25, 60, 63, 105, and 139 each coordinate Fe cation.

This sequence belongs to the ferritin family. Oligomer of 12 or 24 subunits. The functional molecule is roughly spherical and contains a central cavity into which the polymeric mineral iron core is deposited. In terms of tissue distribution, expressed in somatic tissues but not in oocytes.

The protein resides in the cytoplasm. The catalysed reaction is 4 Fe(2+) + O2 + 4 H(+) = 4 Fe(3+) + 2 H2O. In terms of biological role, stores iron in a soluble, non-toxic, readily available form. Important for iron homeostasis. Has ferroxidase activity. Iron is taken up in the ferrous form and deposited as ferric hydroxides after oxidation. The chain is Soma ferritin from Lymnaea stagnalis (Great pond snail).